We begin with the raw amino-acid sequence, 60 residues long: Single-pass membrane and coiled-coil domain-containing protein 4 homolog (60 aa).

The interval 1 to 23 is disordered; it reads MRKLRGGQTKETRKQRQERKEEN. The segment covering 8–23 has biased composition (basic and acidic residues); that stretch reads QTKETRKQRQERKEEN. The stretch at 8–33 forms a coiled coil; that stretch reads QTKETRKQRQERKEENLKIQQQMKTI. Residues 31 to 51 traverse the membrane as a helical segment; that stretch reads KTIVLPTIGVIFLCIVVYVFL.

Belongs to the SMCO4 family.

It localises to the membrane. This Anopheles gambiae (African malaria mosquito) protein is Single-pass membrane and coiled-coil domain-containing protein 4 homolog.